Consider the following 530-residue polypeptide: MNNARPIRRALISVSDKTGIVEFAQALAERGVDILSTGGTARLLAEQGIAVTEVSDYTGFPEMMDGRVKTLHPKVHGGVLGRRGQDDEVMAKHGINPIDMVVVNLYPFAETVAKEGCTLADAVENIDIGGPTMVRSAAKNHKDVTIVVNASDYHRVITEMDANDTSLTLETRFDLAIAAFEHTAAYDGMIANYFGTMVPSYGENKEGDEESKFPRTFNQQFIKKQDMRYGENSHQAAAFYVEANPQEASVATARQIQGKALSYNNIADTDAALECVKEFNEPACVIVKHANPCGVALGKDILEAYNRAYQTDPTSAFGGIIAFNQELDAETATAIVERQFVEVIIAPSVSAEAMEVVAAKKNVRLLECGEWTTKTTGFDVKRVNGGLLVQDRDQGMVSLDDLKVVSKRQPTEEELKDALFCWKVAKYVKSNAIVYSKGDMTIGVGAGQMSRVYSAKIAGIKAADEGLQVEGCVMASDAFFPFRDGIDAAAEAGIKCVIQPGGSMRDDEVIAAADEHGMAMIFTGMRHFRH.

Positions 1-148 (MNNARPIRRA…KNHKDVTIVV (148 aa)) constitute an MGS-like domain.

It belongs to the PurH family.

It carries out the reaction (6R)-10-formyltetrahydrofolate + 5-amino-1-(5-phospho-beta-D-ribosyl)imidazole-4-carboxamide = 5-formamido-1-(5-phospho-D-ribosyl)imidazole-4-carboxamide + (6S)-5,6,7,8-tetrahydrofolate. It catalyses the reaction IMP + H2O = 5-formamido-1-(5-phospho-D-ribosyl)imidazole-4-carboxamide. It functions in the pathway purine metabolism; IMP biosynthesis via de novo pathway; 5-formamido-1-(5-phospho-D-ribosyl)imidazole-4-carboxamide from 5-amino-1-(5-phospho-D-ribosyl)imidazole-4-carboxamide (10-formyl THF route): step 1/1. It participates in purine metabolism; IMP biosynthesis via de novo pathway; IMP from 5-formamido-1-(5-phospho-D-ribosyl)imidazole-4-carboxamide: step 1/1. This Vibrio vulnificus (strain YJ016) protein is Bifunctional purine biosynthesis protein PurH.